Reading from the N-terminus, the 331-residue chain is Ferredoxin--NADP reductase (331 aa).

FAD-binding residues include Thr14, Glu33, Gln41, Tyr46, Val86, Phe120, Asp284, and Ser327.

This sequence belongs to the ferredoxin--NADP reductase type 2 family. In terms of assembly, homodimer. Requires FAD as cofactor.

The catalysed reaction is 2 reduced [2Fe-2S]-[ferredoxin] + NADP(+) + H(+) = 2 oxidized [2Fe-2S]-[ferredoxin] + NADPH. In Picrophilus torridus (strain ATCC 700027 / DSM 9790 / JCM 10055 / NBRC 100828 / KAW 2/3), this protein is Ferredoxin--NADP reductase.